Here is a 512-residue protein sequence, read N- to C-terminus: Bifunctional purine biosynthesis protein PurH (512 aa).

Residues 1-144 (MKRALVSVSD…KNYRDVVVVV (144 aa)) enclose the MGS-like domain.

Belongs to the PurH family.

It catalyses the reaction (6R)-10-formyltetrahydrofolate + 5-amino-1-(5-phospho-beta-D-ribosyl)imidazole-4-carboxamide = 5-formamido-1-(5-phospho-D-ribosyl)imidazole-4-carboxamide + (6S)-5,6,7,8-tetrahydrofolate. It carries out the reaction IMP + H2O = 5-formamido-1-(5-phospho-D-ribosyl)imidazole-4-carboxamide. It functions in the pathway purine metabolism; IMP biosynthesis via de novo pathway; 5-formamido-1-(5-phospho-D-ribosyl)imidazole-4-carboxamide from 5-amino-1-(5-phospho-D-ribosyl)imidazole-4-carboxamide (10-formyl THF route): step 1/1. Its pathway is purine metabolism; IMP biosynthesis via de novo pathway; IMP from 5-formamido-1-(5-phospho-D-ribosyl)imidazole-4-carboxamide: step 1/1. The polypeptide is Bifunctional purine biosynthesis protein PurH (Ligilactobacillus salivarius (strain UCC118) (Lactobacillus salivarius)).